The chain runs to 424 residues: Alkaline nuclease (424 aa).

The protein belongs to the baculo-herpesviridae alkaline nuclease family. As to quaternary structure, interacts with LEF-3.

The protein localises to the host nucleus. Its function is as follows. May play a role in maturation and encapsidation of viral replicated genome, by promoting DNA homologous recombination. Exhibits endonuclease and 5'-&gt;3' exonuclease activities. The endonuclease activity displays a specificity for ssDNA in vitro. The polypeptide is Alkaline nuclease (ALK-EXO) (Orgyia pseudotsugata (Douglas-fir tussock moth)).